A 26-amino-acid chain; its full sequence is Hainantoxin F1-31.97 (26 aa).

2 cysteine pairs are disulfide-bonded: Cys-2/Cys-16 and Cys-9/Cys-21.

It belongs to the neurotoxin 10 (Hwtx-1) family. 17 (Hntx-9) subfamily. Expressed by the venom gland.

It localises to the secreted. Its function is as follows. Ion channel inhibitor. In Cyriopagopus hainanus (Chinese bird spider), this protein is Hainantoxin F1-31.97.